Consider the following 302-residue polypeptide: Hydra actinoporin-like toxin 4 (302 aa).

Residues 1-17 form the signal peptide; that stretch reads MLLFKLIVCFFFIFAIG. The interval 22 to 93 is disordered; that stretch reads KKDETSGENE…PAPKQTTTKK (72 aa). Residues 60-75 are compositionally biased toward low complexity; the sequence is KPPAAKPPAASKITKP. A compositionally biased stretch (pro residues) spans 76–86; that stretch reads QVPPQKKPPAP. The short motif at 274–276 is the Cell attachment site element; the sequence is KAG.

Belongs to the actinoporin family. HALT subfamily. As to quaternary structure, octamer or nonamer in membranes. Monomer in the soluble state. In vitro, interacts with folate receptor alpha (of target organism).

The protein resides in the nematocyst. Its subcellular location is the secreted. It is found in the target cell membrane. In terms of biological role, pore-forming protein that forms hydrophilic pores and causes cytolysis. Compared to equinatoxin-2 (AC P61914), it reveals lower cytolysis activity (5-12-fold difference, tested on erythrocytes), a larger pore size (probably 2-3 nm) and different affinity to membrane lipids (100-fold lower affinity to sphingomyelin). Binds to sulfatides. Shows cytolytic activity on HeLa cells, with a different potency than its paralogs (from most potent to less potent: HALT-4&gt;HALT-6~HALT-1&gt;HALT-3&gt;HALT-7&gt;HALT-2). This recombinant protein has the highest cytolytic activity compared to other rHALT proteins, probably due to its longer N-terminal sequence that may penetrate the lipid bilayer more effectively. Pore formation is a multi-step process that involves specific recognition of membrane lipid by a protein aromatic residues rich region, firm binding to the membrane (mainly driven by hydrophobic interactions) accompanied by the transfer of the N-terminal region to the lipid-water interface and finally pore formation after oligomerization of monomers. In vitro, binds to the folate receptor alpha (FOLR1), a GPI-anchored membrane protein that plays a major role in the uptake of folate/folic acid into cells via endocytosis, suggesting a possible involvement of this receptor in the mechanism of HALT-1-induced cell lysis. In vivo, does not cause visible paralysis in larvae of the blowfly Sarcophaga faculata, the most common arthropod prey of Hydra. The polypeptide is Hydra actinoporin-like toxin 4 (Hydra vulgaris (Hydra)).